Reading from the N-terminus, the 37-residue chain is MVEPLLSGIVLGMITVSALGLFVAAYLQYRRGNQFEI.

A helical transmembrane segment spans residues 5-25 (LLSGIVLGMITVSALGLFVAA).

This sequence belongs to the PetG family. The 4 large subunits of the cytochrome b6-f complex are cytochrome b6, subunit IV (17 kDa polypeptide, PetD), cytochrome f and the Rieske protein, while the 4 small subunits are PetG, PetL, PetM and PetN. The complex functions as a dimer.

It is found in the plastid. The protein localises to the chloroplast thylakoid membrane. In terms of biological role, component of the cytochrome b6-f complex, which mediates electron transfer between photosystem II (PSII) and photosystem I (PSI), cyclic electron flow around PSI, and state transitions. PetG is required for either the stability or assembly of the cytochrome b6-f complex. In Trieres chinensis (Marine centric diatom), this protein is Cytochrome b6-f complex subunit 5.